Here is a 400-residue protein sequence, read N- to C-terminus: Methylamine dehydrogenase heavy chain (400 aa).

The N-terminal stretch at 1-27 (MTTFQPGRLAGQLAATALLAATCSAFA) is a signal peptide.

It belongs to the aromatic amine dehydrogenase heavy chain family. Tetramer of two light and two heavy chains.

Its subcellular location is the periplasm. The enzyme catalyses 2 oxidized [amicyanin] + methylamine + H2O = 2 reduced [amicyanin] + formaldehyde + NH4(+) + 2 H(+). Functionally, methylamine dehydrogenase carries out the oxidation of methylamine. Electrons are passed from methylamine dehydrogenase to amicyanin. This is Methylamine dehydrogenase heavy chain (mauB) from Methylobacillus flagellatus (strain ATCC 51484 / DSM 6875 / VKM B-1610 / KT).